The primary structure comprises 187 residues: Ribosome-recycling factor (187 aa).

This sequence belongs to the RRF family.

The protein resides in the cytoplasm. Functionally, responsible for the release of ribosomes from messenger RNA at the termination of protein biosynthesis. May increase the efficiency of translation by recycling ribosomes from one round of translation to another. The chain is Ribosome-recycling factor from Methylobacterium sp. (strain 4-46).